A 1187-amino-acid polypeptide reads, in one-letter code: MEDDDDDQRLLHSLGVTSADIHDIERRIISQATTDPADSSGPTINGGHQPDDALAKLHHKLRSVQIEIDAVASTIKGAKLKQPSGNKPHEHKGKDQPDHHGAGHLQQALAADRLTSLRKAKAQIQKEILQSHPSPSASNRKDKMLAMLVQDEPRHKKPPVGPKNIVKRPMKTVTYDDDNNFDAVLDGASAGFMETEREELIRKGLLTPFHKLKGFEKRVELPEPSHRQDDSAGQTEEAMEASRIARVAQSLKQIAQNRPATKLLDSESLPKLDAPAAPFQRLGKPLKRPVSPSSDEQEKKRPRNKTKRPLPGKKWRKANSIKESSLDDNDVGEAAVSVSDDDEDQVTEGSDELTDVTLEGGLRIPGTLYTQLFDYQKVGVQWLWELHCQRAGGIIGDEMGLGKTVQVLSFLGSLHNSGLYKPSIVVCPVTLLQQWRREASRWYPKFKVEILHDSANSSSKKSKRSSDSDSEASWDSDQEEAVTCSKPAKKWDDLISRVVSSGSGLLLTTYEQLRILGEKLLDIEWGYAVLDEGHRIRNPNAEITLVCKQLQTVHRIIMTGAPIQNKLSELWSLFDFVFPGKLGVLPVFEAEFSVPITVGGYANATPLQVSTAYRCAVVLRDLVMPYLLRRMKADVNAQLPKKTEHVLFCSLTTEQRATYRAFLASSEVEQIFDGNRNSLYGIDVLRKICNHPDLLEREHAAQNPDYGNPERSGKMKVVEQVLKVWKEQGHRVLLFTQTQQMLDIMENFLTACEYQYRRMDGLTPAKQRMALIDEFNNTDEIFIFILTTKVGGLGTNLTGANRIIIYDPDWNPSTDMQARERAWRIGQTRDVTVYRLITRGTIEEKVYHRQIYKHFLTNKVLKDPQQRRFFKARDMKDLFTLQDDDNNGSTETSNIFSQLSEDVNIGVPSDKQQDQLYAASATPTTSGTEPSSSRHGQGKEDHCPDQADEECNILKSLFDAQGIHSAINHDAIMNANDDQKLRLEAEATQVAQRAAEALRQSRMLRSHESFSVPTWTGRAGAAGAPSSVRRKFGSTLNTQLVNSSQPSETSNGRGQSLQVGALNGKALSSAELLARIRGTREGAASDALEHQLNLGSASNHTSSSSGNGRASSSSTRSMIVQPEVLIRQLCTFIQQHGGSASSTSITEHFKNRILSKDMLLFKNLLKEIATLQRGANGATWVLKPDYQ.

Positions 31 to 43 are enriched in polar residues; that stretch reads QATTDPADSSGPT. Disordered stretches follow at residues 31-53, 75-102, 217-242, and 265-351; these read QATT…PDDA, IKGA…HHGA, KRVE…MEAS, and DSES…EGSD. Basic and acidic residues-rich tracts occupy residues 92 to 101 and 217 to 230; these read KGKDQPDHHG and KRVE…RQDD. A compositionally biased stretch (basic residues) spans 300 to 319; it reads KRPRNKTKRPLPGKKWRKAN. Acidic residues predominate over residues 339–351; it reads SDDDEDQVTEGSD. Positions 384-580 constitute a Helicase ATP-binding domain; that stretch reads WELHCQRAGG…WSLFDFVFPG (197 aa). Residue 397-404 participates in ATP binding; sequence DEMGLGKT. Positions 457-480 are disordered; sequence SSSKKSKRSSDSDSEASWDSDQEE. Residues 468–480 are compositionally biased toward acidic residues; the sequence is SDSEASWDSDQEE. The short motif at 531-534 is the DEGH box element; that stretch reads DEGH. In terms of domain architecture, Helicase C-terminal spans 716–876; that stretch reads KVVEQVLKVW…RRFFKARDMK (161 aa). 2 disordered regions span residues 916–945 and 1095–1116; these read LYAA…HCPD and GSAS…SSTR. The segment covering 918–933 has biased composition (low complexity); the sequence is AASATPTTSGTEPSSS.

The protein belongs to the SNF2/RAD54 helicase family. Homodimer. Binds DNA. Expressed in proliferating tissues. Highly expressed in shoot apical meristem (SAM). Expressed in roots, young leaves, flag leaves, and panicles. Expressed at very low levels in mature leaves.

It is found in the nucleus. Essential factor involved in transcription-coupled nucleotide excision repair (TCR) which allows RNA polymerase II-blocking lesions to be rapidly removed from the transcribed strand of active genes. Upon DNA-binding, it locally modifies DNA conformation by wrapping the DNA around itself, thereby modifying the interface between stalled RNA polymerase II and DNA. It is required for transcription-coupled repair complex formation. The protein is DNA excision repair protein CSB of Oryza sativa subsp. japonica (Rice).